A 645-amino-acid polypeptide reads, in one-letter code: Translation factor GUF1, mitochondrial (645 aa).

The region spanning Glu44 to Thr228 is the tr-type G domain. GTP-binding positions include Ala53–Ser60, Asp120–His124, and Asn174–Asp177.

This sequence belongs to the TRAFAC class translation factor GTPase superfamily. Classic translation factor GTPase family. LepA subfamily.

The protein localises to the mitochondrion inner membrane. It carries out the reaction GTP + H2O = GDP + phosphate + H(+). In terms of biological role, promotes mitochondrial protein synthesis. May act as a fidelity factor of the translation reaction, by catalyzing a one-codon backward translocation of tRNAs on improperly translocated ribosomes. Binds to mitochondrial ribosomes in a GTP-dependent manner. In Saccharomyces cerevisiae (strain RM11-1a) (Baker's yeast), this protein is Translation factor GUF1, mitochondrial.